The following is a 396-amino-acid chain: S-adenosylmethionine synthase (396 aa).

An ATP-binding site is contributed by His16. Position 18 (Asp18) interacts with Mg(2+). Glu44 contributes to the K(+) binding site. 2 residues coordinate L-methionine: Glu57 and Gln100. Positions 100–110 (QSPDINQGVDR) are flexible loop. Residues 165 to 167 (DAK), Asp240, 246 to 247 (RK), Ala263, and Lys267 contribute to the ATP site. An L-methionine-binding site is contributed by Asp240. Lys271 lines the L-methionine pocket.

This sequence belongs to the AdoMet synthase family. Homotetramer; dimer of dimers. The cofactor is Mg(2+). It depends on K(+) as a cofactor.

The protein localises to the cytoplasm. The catalysed reaction is L-methionine + ATP + H2O = S-adenosyl-L-methionine + phosphate + diphosphate. It functions in the pathway amino-acid biosynthesis; S-adenosyl-L-methionine biosynthesis; S-adenosyl-L-methionine from L-methionine: step 1/1. In terms of biological role, catalyzes the formation of S-adenosylmethionine (AdoMet) from methionine and ATP. The overall synthetic reaction is composed of two sequential steps, AdoMet formation and the subsequent tripolyphosphate hydrolysis which occurs prior to release of AdoMet from the enzyme. This is S-adenosylmethionine synthase from Pseudomonas fluorescens (strain Pf0-1).